Here is a 465-residue protein sequence, read N- to C-terminus: Gamma-aminobutyric acid receptor subunit rho-2 (465 aa).

A signal peptide spans 1–20; it reads MPYFTRLILFLFCLMVLVES. Residues 21-260 lie on the Extracellular side of the membrane; it reads RKPKRKRWTG…LYINFTLRRH (240 aa). Arg-105 contributes to the 4-aminobutanoate binding site. Asn-120 carries N-linked (GlcNAc...) asparagine glycosylation. 4-aminobutanoate is bound at residue Ser-169. The cysteines at positions 178 and 192 are disulfide-linked. Glu-197 is a 4-aminobutanoate binding site. An N-linked (GlcNAc...) asparagine glycan is attached at Asn-254. The chain crosses the membrane as a helical span at residues 261–281; that stretch reads IFFFLLQTYFPATLMVMLSWV. At 282–293 the chain is on the cytoplasmic side; sequence SFWIDRRAVPAR. The chain crosses the membrane as a helical span at residues 294 to 314; it reads VSLGITTVLTMTTIITGVNAS. Residues 315–325 lie on the Extracellular side of the membrane; sequence MPRVSYVKAVD. The chain crosses the membrane as a helical span at residues 326 to 346; sequence IYLWVSFVFVFLSVLEYAAVN. Residues 347–443 are Cytoplasmic-facing; the sequence is YLTTVQERKE…IFQNTHAIDK (97 aa). A helical transmembrane segment spans residues 444–464; that stretch reads YSRLIFPASYIFFNLIYWSVF. Ser-465 is a topological domain (extracellular).

Belongs to the ligand-gated ion channel (TC 1.A.9) family. Gamma-aminobutyric acid receptor (TC 1.A.9.5) subfamily. GABRR2 sub-subfamily. In terms of assembly, three rho subunits (rho-1/GBRR1, rho-2/GBRR2 and rho-3/GBRR3) coassemble either to form functional homopentamers or heteropentamers. Rho-2 is unable to form a functional homopentamer. Interacts with SQSTM1.

Its subcellular location is the postsynaptic cell membrane. The protein resides in the cell membrane. It catalyses the reaction chloride(in) = chloride(out). Functionally, rho subunit of the pentameric ligand-gated chloride channels responsible for mediating the effects of gamma-aminobutyric acid (GABA), the major inhibitory neurotransmitter in the brain. Rho-containing GABA-gated chloride channels are a subclass of GABA(A) receptors (GABAARs) entirely composed of rho subunits, where GABA molecules bind at the rho intersubunit interfaces. When activated by GABA, rho-GABAARs selectively allow the flow of chloride anions across the cell membrane down their electrochemical gradient. Rho-2 GABAARs may contribute to the regulation of glial development in the cerebellum by controlling extrasynaptic transmission. Rho-2 GABAARs are also involved in neuronal tonic (extrasynaptic) and phasic (synaptic) transmission in the Purkinje neurons of the cerebellum. Rho-2 GABAARs expressed in retina may play a role in retinal neurotransmission. The chain is Gamma-aminobutyric acid receptor subunit rho-2 from Homo sapiens (Human).